The primary structure comprises 838 residues: MLKAIAHKVFGSRNERYLKGLRPLIEAINAFEPQIQALSDDAMRARVAELRQEVAEGRPLDDVLPETFAIVREASVRSLGMRHYDVQLIGGITLHQGKIAEMKTGEGKTLVATLPVVLNALSGKGVHLITVNDYLAKRDAAWMGKLYGFLGLSVGVIVHGLDDQQRQAAYGADITYGTNNEFGFDYLRDNMKFYQEQLVQRPLNFAIVDEVDSILIDEARTPLIISGQAEDSSTLYARVNALIPMLRRETHFTVDEKARTVLLTDEGVARMEDVLKIDNLFDPANITLQHHVLQALKAHHIFQRDVDYVVKDGQVIIVDEFTGRLMPGRRYSDGLHQALEAKELVQVEAENQTLATITFQNYFRMYKKLSGMTGTADTEAVEFREIYGLEVISIPTNKPMVRKDFPDLVYKTQREKFEAIAADVKDLHKRGQPVLVGTVSIEKSELLSDMLKKTGVPHDVLNAKNHEKEAEIVALAGHAGKVTIATNMAGRGTDIVLGPGVTDLGGLHILGTERHESRRIDNQLRGRSGRQGDPGSSRFYLALDDDLMRLFGSDRLKGLMDKLGMEDGEPIENRMVSRAIENAQKRVEAHNFEIRKQLLDYDNVMNQQREVIYSRRRELMGSDEPETFVQEHIEEIVDEIFAPFAALKGEPDPELLEVAAAQIEDILDYKIELADGGEAEKQAVLEAVTGRQRELAETAGAHYKEVARYFLLDSLDRHWKEHLLSMDHLRDGIGLRGYGQKDPKQEYKREGFELFQQLIYNMRDAAIRALSRVRIRAEVQEQEFQHKDETANVQYSGPAESAEDAKKEPKRREAPKVGRNDPCPCGSGKKYKKCHGAK.

Residues Q87, 105-109 (GEGKT), and D494 each bind ATP. 2 stretches are compositionally biased toward basic and acidic residues: residues 781–790 (EQEFQHKDET) and 803–819 (EDAK…KVGR). The disordered stretch occupies residues 781-838 (EQEFQHKDETANVQYSGPAESAEDAKKEPKRREAPKVGRNDPCPCGSGKKYKKCHGAK). Zn(2+) contacts are provided by C823, C825, C834, and H835. Over residues 829–838 (KKYKKCHGAK) the composition is skewed to basic residues.

The protein belongs to the SecA family. Monomer and homodimer. Part of the essential Sec protein translocation apparatus which comprises SecA, SecYEG and auxiliary proteins SecDF-YajC and YidC. Zn(2+) is required as a cofactor.

It localises to the cell inner membrane. Its subcellular location is the cytoplasm. It catalyses the reaction ATP + H2O + cellular proteinSide 1 = ADP + phosphate + cellular proteinSide 2.. Its function is as follows. Part of the Sec protein translocase complex. Interacts with the SecYEG preprotein conducting channel. Has a central role in coupling the hydrolysis of ATP to the transfer of proteins into and across the cell membrane, serving as an ATP-driven molecular motor driving the stepwise translocation of polypeptide chains across the membrane. In Solidesulfovibrio magneticus (strain ATCC 700980 / DSM 13731 / RS-1) (Desulfovibrio magneticus), this protein is Protein translocase subunit SecA.